A 286-amino-acid chain; its full sequence is 2-dehydro-3-deoxyphosphooctonate aldolase (286 aa).

The protein belongs to the KdsA family.

The protein localises to the cytoplasm. It catalyses the reaction D-arabinose 5-phosphate + phosphoenolpyruvate + H2O = 3-deoxy-alpha-D-manno-2-octulosonate-8-phosphate + phosphate. The protein operates within carbohydrate biosynthesis; 3-deoxy-D-manno-octulosonate biosynthesis; 3-deoxy-D-manno-octulosonate from D-ribulose 5-phosphate: step 2/3. It functions in the pathway bacterial outer membrane biogenesis; lipopolysaccharide biosynthesis. The sequence is that of 2-dehydro-3-deoxyphosphooctonate aldolase from Bradyrhizobium sp. (strain BTAi1 / ATCC BAA-1182).